Here is a 469-residue protein sequence, read N- to C-terminus: Protein RdxA (469 aa).

Residues 1–23 are Cytoplasmic-facing; it reads MSEPLYAPRTPIFPRQISGAFRT. Residues 24–44 form a helical membrane-spanning segment; the sequence is AKWWILAVSLGIYLLTPWLRW. The Periplasmic segment spans residues 45–75; the sequence is DRGPNLPDQAVLIDIAGRRFFLFGIQIWPHE. The chain crosses the membrane as a helical span at residues 76–96; sequence FYFVAGLLIMAGLGLFLFTSA. Topologically, residues 97–149 are cytoplasmic; that stretch reads AGRVWCGYACPQTVWTDLFLLVERRIEGDRNAQIRLHRQAWTAEKVWKRLLKW. The helical transmembrane segment at 150-170 threads the bilayer; the sequence is SVWAAISLLTGGAWVFYFADA. Residues 171–183 are Periplasmic-facing; that stretch reads PTLLNGLVTLTAH. The chain crosses the membrane as a helical span at residues 184–204; sequence PVAWITIFVLTATTFVFAGFM. The Cytoplasmic portion of the chain corresponds to 205–327; the sequence is REQICIYACP…PAWRRLFRLR (123 aa). 4Fe-4S ferredoxin-type domains lie at 242–270 and 266–295; these read KRSE…IREG and DIRE…IGRP. Cys-251, Cys-254, Cys-257, Cys-261, Cys-275, Cys-278, Cys-281, and Cys-285 together coordinate [4Fe-4S] cluster. A helical transmembrane segment spans residues 328 to 348; sequence TSLYAVLWAGVGVTLIAALLL. Topologically, residues 349 to 469 are periplasmic; that stretch reads RPAVDLAVTP…VKAAFHGARS (121 aa).

Its subcellular location is the cell membrane. In terms of biological role, predicted to be involved in a redox process. In Cereibacter sphaeroides (strain ATCC 17023 / DSM 158 / JCM 6121 / CCUG 31486 / LMG 2827 / NBRC 12203 / NCIMB 8253 / ATH 2.4.1.) (Rhodobacter sphaeroides), this protein is Protein RdxA (rdxA).